Reading from the N-terminus, the 583-residue chain is uncharacterized protein (583 aa).

24-140 (ILADIDDEQL…SAMLRAMARM (117 aa)) contributes to the a nucleoside 3',5'-cyclic phosphate binding site. Positions 309–469 (LVMAGGGARG…LNNLPANVMC (161 aa)) constitute a PNPLA domain. A GXGXXG motif is present at residues 313–318 (GGGARG). Residues 340–344 (GTSSG) carry the GXSXG motif. S342 functions as the Nucleophile in the catalytic mechanism. D456 serves as the catalytic Proton acceptor. The DGA/G signature appears at 456–458 (DGG).

It belongs to the NTE family.

This is an uncharacterized protein from Mycobacterium tuberculosis (strain CDC 1551 / Oshkosh).